Consider the following 366-residue polypeptide: Purple acid phosphatase 3 (366 aa).

Residues 1–32 (MTYIYRDTKITTKSTIPFLIFFLFCFSNLSMA) form the signal peptide. Asp81 is a Fe cation binding site. Asn89 is a glycosylation site (N-linked (GlcNAc...) asparagine). Positions 114 and 117 each coordinate Fe cation. Asp114 is a binding site for Zn(2+). Asn152 and His246 together coordinate Zn(2+). Catalysis depends on His255, which acts as the Proton donor. Residue His281 participates in Zn(2+) binding. Residue 281 to 283 (HDH) participates in substrate binding. Position 283 (His283) interacts with Fe cation.

It belongs to the metallophosphoesterase superfamily. Purple acid phosphatase family. Homodimer. The cofactor is Fe cation. It depends on Zn(2+) as a cofactor. Expressed in stems, leaves, flowers and siliques.

The protein resides in the secreted. It carries out the reaction a phosphate monoester + H2O = an alcohol + phosphate. The sequence is that of Purple acid phosphatase 3 (PAP3) from Arabidopsis thaliana (Mouse-ear cress).